The primary structure comprises 82 residues: Small ribosomal subunit protein uS12 (82 aa).

Aspartate 59 carries the post-translational modification 3-methylthioaspartic acid.

This sequence belongs to the universal ribosomal protein uS12 family. Part of the 30S ribosomal subunit. Contacts proteins S8 and S17. May interact with IF1 in the 30S initiation complex.

With S4 and S5 plays an important role in translational accuracy. In terms of biological role, interacts with and stabilizes bases of the 16S rRNA that are involved in tRNA selection in the A site and with the mRNA backbone. Located at the interface of the 30S and 50S subunits, it traverses the body of the 30S subunit contacting proteins on the other side and probably holding the rRNA structure together. The combined cluster of proteins S8, S12 and S17 appears to hold together the shoulder and platform of the 30S subunit. This is Small ribosomal subunit protein uS12 (rpsL) from Actinobacillus pleuropneumoniae (Haemophilus pleuropneumoniae).